We begin with the raw amino-acid sequence, 261 residues long: MSDILDRIIAVKREEIAAAMRSAPLEALKLEASARDLRDFVGALRAKQAAGHAAVIAEVKKASPSKGVLREHFVPADIARSYAAHGAACLSVLTDEQFFQGSVRYLEEARAACTLPVLRKDFIVDAYQILEARAMGADAILLIAAALDTPLMQDLEAYAHSLGLAVLVEVHDRDEMEQALTLKTPLLGINNRNLRTFETSIQTTLDMLDMIPPERIVVTESGILSRTDVDTMRAANVNAFLVGEAFMRADQPGEELARMFF.

It belongs to the TrpC family.

It carries out the reaction 1-(2-carboxyphenylamino)-1-deoxy-D-ribulose 5-phosphate + H(+) = (1S,2R)-1-C-(indol-3-yl)glycerol 3-phosphate + CO2 + H2O. It functions in the pathway amino-acid biosynthesis; L-tryptophan biosynthesis; L-tryptophan from chorismate: step 4/5. This chain is Indole-3-glycerol phosphate synthase, found in Burkholderia ambifaria (strain ATCC BAA-244 / DSM 16087 / CCUG 44356 / LMG 19182 / AMMD) (Burkholderia cepacia (strain AMMD)).